The following is a 335-amino-acid chain: Trans-1,2-dihydrobenzene-1,2-diol dehydrogenase (335 aa).

The protein belongs to the Gfo/Idh/MocA family. As to quaternary structure, homodimer.

It carries out the reaction (1R,2R)-1,2-dihydrobenzene-1,2-diol + NADP(+) = catechol + NADPH + H(+). The enzyme catalyses D-xylose + NADP(+) = D-xylono-1,5-lactone + NADPH + H(+). This is Trans-1,2-dihydrobenzene-1,2-diol dehydrogenase (DHDH) from Bos taurus (Bovine).